Consider the following 438-residue polypeptide: MSCRFQSSSMSYGGGFGAGSCQLGGGRNISTCSSRFVTGGSSGGYGGGMSCGFGGGAGGGYGGGFGGGFGGSCGGGFGGGFGDFGSVDGGLLSGNEKITMQNLNDRLASYLEKVRALEAANADLEVKIRDWHLKQSPTSPERDYSAYYKTIEELRIKILEATTDNNRIVLEIDNARLAADDFRLKYENELALRQSVEADINGLRRVLDELTLAKTDLEMQIESLNEELAYLKKNHEEEMKEFSNQAVGQVNVEMDATPGIDLTRVLAEMREQYEALAEKNRRDAEAWFQAKSAELNKEVSSNAAMIQTSKTEITELRRTLQGLEIELQSQLSMKAGLESTLAETECRYALQLQQIQALISSIEAQLSELRSEMECQNQEYKMLLDIKTRLEQEIATYRSLLEGQDAKMTGFNTGGNSTTTSNTSTSPSTSGRPDFRKY.

Residues 1–95 (MSCRFQSSSM…SVDGGLLSGN (95 aa)) are head. Arg27 and Arg35 each carry omega-N-methylarginine. Residues 96 to 131 (EKITMQNLNDRLASYLEKVRALEAANADLEVKIRDW) are coil. The IF rod domain occupies 96–408 (EKITMQNLND…SLLEGQDAKM (313 aa)). A linker 1 region spans residues 132–150 (HLKQSPTSPERDYSAYYKT). The interval 151-242 (IEELRIKILE…KNHEEEMKEF (92 aa)) is coil 1B. Residues 243 to 265 (SNQAVGQVNVEMDATPGIDLTRV) are linker 12. A coil 2 region spans residues 266–404 (LAEMREQYEA…ATYRSLLEGQ (139 aa)). Residues 405–438 (DAKMTGFNTGGNSTTTSNTSTSPSTSGRPDFRKY) are tail. The disordered stretch occupies residues 408–438 (MTGFNTGGNSTTTSNTSTSPSTSGRPDFRKY). The segment covering 409 to 431 (TGFNTGGNSTTTSNTSTSPSTSG) has biased composition (low complexity).

This sequence belongs to the intermediate filament family. Heterotetramer of two type I and two type II keratins. O-glycosylated; glycans consist of single N-acetylglucosamine residues.

In terms of biological role, type 1 keratin. Maintains postnatal tongue mucosal cell homeostasis and tissue organization in response to mechanical stress, potentially via regulation of the G1/S phase cyclins CCNE1 and CCNE2. This is Keratin, type I cytoskeletal 13 from Rattus norvegicus (Rat).